A 172-amino-acid chain; its full sequence is Large ribosomal subunit protein uL11m (172 aa).

Belongs to the universal ribosomal protein uL11 family.

The protein resides in the mitochondrion. This chain is Large ribosomal subunit protein uL11m (mrpl11), found in Dictyostelium discoideum (Social amoeba).